Here is a 572-residue protein sequence, read N- to C-terminus: ATP-dependent lipid A-core flippase (572 aa).

5 consecutive transmembrane segments (helical) span residues Ile-14 to Leu-34, Val-55 to Leu-75, Ile-148 to Ile-168, Met-249 to Ile-269, and Ser-272 to Val-292. The ABC transmembrane type-1 domain maps to Phe-22 to Gln-304. In terms of domain architecture, ABC transporter spans Ile-338–Met-571. Residue Gly-370–Thr-377 coordinates ATP.

This sequence belongs to the ABC transporter superfamily. Lipid exporter (TC 3.A.1.106) family. Homodimer.

It localises to the cell inner membrane. The enzyme catalyses ATP + H2O + lipid A-core oligosaccharideSide 1 = ADP + phosphate + lipid A-core oligosaccharideSide 2.. Its function is as follows. Involved in lipopolysaccharide (LPS) biosynthesis. Translocates lipid A-core from the inner to the outer leaflet of the inner membrane. Transmembrane domains (TMD) form a pore in the inner membrane and the ATP-binding domain (NBD) is responsible for energy generation. This is ATP-dependent lipid A-core flippase from Desulfotalea psychrophila (strain LSv54 / DSM 12343).